A 205-amino-acid polypeptide reads, in one-letter code: Small ribosomal subunit protein uS4 (205 aa).

The S4 RNA-binding domain occupies 94–157 (SRLDTVVYRM…QQIPLIQESI (64 aa)).

Belongs to the universal ribosomal protein uS4 family. Part of the 30S ribosomal subunit. Contacts protein S5. The interaction surface between S4 and S5 is involved in control of translational fidelity.

One of the primary rRNA binding proteins, it binds directly to 16S rRNA where it nucleates assembly of the body of the 30S subunit. Its function is as follows. With S5 and S12 plays an important role in translational accuracy. This is Small ribosomal subunit protein uS4 from Rickettsia typhi (strain ATCC VR-144 / Wilmington).